The primary structure comprises 325 residues: Olfactory receptor 14L1 (325 aa).

Over 1–43 (MAQFNKNQLIACRRNGTTTSDFNQTEVAEFFLMGFSNSWDIQI) the chain is Extracellular. A helical membrane pass occupies residues 44 to 64 (VHAALFFLVYLAAVIGNLLII). The Cytoplasmic portion of the chain corresponds to 65-72 (ILTTLDVH). The helical transmembrane segment at 73-93 (LQTPMYFFLRNLSFLDFCYIS) threads the bilayer. Over 94–117 (VTIPKSIVSSLTHDTSISFFGCAL) the chain is Extracellular. The chain crosses the membrane as a helical span at residues 118-138 (QAFFFMDLATTEVAILTVMSY). Residues 139 to 151 (DRYMAICRPLHYE) lie on the Cytoplasmic side of the membrane. Residues 152 to 172 (VIINQGVCLRMMAMSWLSGVI) form a helical membrane-spanning segment. Topologically, residues 173 to 214 (CGFMHVIATFSLPFCGRNRIRQFFCNIPQLLSLLDPKVITIE) are extracellular. The helical transmembrane segment at 215–235 (IGVMVFGTSLVIISFVVITLS) threads the bilayer. Residues 236-255 (YMYIFSVIMRIPSKEGRSKT) are Cytoplasmic-facing. Residues 256–276 (FSTCIPHLVVVTLFMISGSIA) form a helical membrane-spanning segment. The Extracellular segment spans residues 277-289 (YVKPISNSPPVLD). A helical membrane pass occupies residues 290-310 (VFLSAFYTVVPPTLNPVIYSL). Over 311-325 (RNRDMKAALRRQCGP) the chain is Cytoplasmic.

It belongs to the G-protein coupled receptor 1 family.

Its subcellular location is the cell membrane. Its function is as follows. Odorant receptor. The protein is Olfactory receptor 14L1 of Homo sapiens (Human).